Consider the following 37-residue polypeptide: Alpha-conotoxin LvIA (37 aa).

A propeptide spanning residues Phe1 to Arg20 is cleaved from the precursor. 2 disulfide bridges follow: Cys22–Cys28 and Cys23–Cys36. The tract at residues Ser24–Pro26 is ser-Xaa-Pro motif, crucial for potent interaction with nAChR. Cys36 is modified (cysteine amide).

The protein belongs to the conotoxin A superfamily. Expressed by the venom duct.

The protein resides in the secreted. Alpha-conotoxins act on postsynaptic membranes, they bind to the nicotinic acetylcholine receptors (nAChR) and thus inhibit them. This toxin blocks alpha-3-beta-2/CHRNA3-CHRNB2 nAChR with high selectivity (IC(50)=8.67 nM (on rat) and 17.5 (on human)). Also has weaker activity on alpha-6/alpha-3-beta-2-beta-3 (CHRNA6/CHRNA3-CHRNB2-CHRNB3) (IC(50)=108 nM (on rat)), alpha-6/alpha-3-beta-4 (CHRNA6/CHRNA3-CHRNB4) (IC(50)=121 nM (on rat)), alpha-3-beta-4 (CHRNA3-CHRNB4) (IC(50)=148 nM (on rat)), and alpha-7/CHRNA7 nAChRs (IC(50)=3000 nM (on rat)). When tested on mouse with hot-plate tests, this toxin significantly increases the base pain threshold and shows analgesic effects. The protein is Alpha-conotoxin LvIA of Conus lividus (Livid cone).